Reading from the N-terminus, the 488-residue chain is Serine/threonine-protein kinase 32C (488 aa).

Residues 1-56 form a disordered region; that stretch reads MRSGAERRGSSAAAPPSSPPPGRARPAGSDVSPALPPPAASQPRARDAGDARAQPR. Phosphoserine is present on residues S10, S17, and S18. The segment covering 24–33 has biased composition (low complexity); the sequence is ARPAGSDVSP. One can recognise a Protein kinase domain in the interval 94–354; it reads FQILRAIGKG…LQDMQTAPSL (261 aa). ATP is bound by residues 100–108 and K123; that span reads IGKGSFGKV. The active-site Proton acceptor is the D217. A compositionally biased stretch (basic residues) spans 397 to 406; it reads HKKKKRLAKN. Disordered stretches follow at residues 397–420 and 443–488; these read HKKK…QSEN and KRSQ…SGSS.

Belongs to the protein kinase superfamily. Ser/Thr protein kinase family. Mg(2+) is required as a cofactor.

It carries out the reaction L-seryl-[protein] + ATP = O-phospho-L-seryl-[protein] + ADP + H(+). The catalysed reaction is L-threonyl-[protein] + ATP = O-phospho-L-threonyl-[protein] + ADP + H(+). The protein is Serine/threonine-protein kinase 32C of Mus musculus (Mouse).